The sequence spans 296 residues: Thiamine-monophosphate kinase (296 aa).

Positions 32, 46, and 48 each coordinate Mg(2+). Position 55 (D55) interacts with substrate. Mg(2+) is bound by residues D76 and D121. ATP-binding positions include 120–121 (GD) and R144. D206 provides a ligand contact to Mg(2+). S208 contributes to the ATP binding site. D209 serves as a coordination point for Mg(2+). Position 293 (Y293) interacts with substrate.

This sequence belongs to the thiamine-monophosphate kinase family.

It catalyses the reaction thiamine phosphate + ATP = thiamine diphosphate + ADP. It functions in the pathway cofactor biosynthesis; thiamine diphosphate biosynthesis; thiamine diphosphate from thiamine phosphate: step 1/1. Functionally, catalyzes the ATP-dependent phosphorylation of thiamine-monophosphate (TMP) to form thiamine-pyrophosphate (TPP), the active form of vitamin B1. The protein is Thiamine-monophosphate kinase of Archaeoglobus fulgidus (strain ATCC 49558 / DSM 4304 / JCM 9628 / NBRC 100126 / VC-16).